The following is a 111-amino-acid chain: Nucleoid-associated protein Cpar_0834 (111 aa).

The protein belongs to the YbaB/EbfC family. Homodimer.

The protein resides in the cytoplasm. It localises to the nucleoid. Its function is as follows. Binds to DNA and alters its conformation. May be involved in regulation of gene expression, nucleoid organization and DNA protection. The polypeptide is Nucleoid-associated protein Cpar_0834 (Chlorobaculum parvum (strain DSM 263 / NCIMB 8327) (Chlorobium vibrioforme subsp. thiosulfatophilum)).